The following is a 271-amino-acid chain: NADH-quinone oxidoreductase subunit B (271 aa).

Positions 37, 38, 103, and 132 each coordinate [4Fe-4S] cluster. The tract at residues 227 to 271 (LAPPSVFGRAKRIPVDPKPSDEARAHGPGPTTESIGDVDGPDRGI) is disordered. The span at 239 to 251 (IPVDPKPSDEARA) shows a compositional bias: basic and acidic residues.

This sequence belongs to the complex I 20 kDa subunit family. In terms of assembly, NDH-1 is composed of 14 different subunits. Subunits NuoB, C, D, E, F, and G constitute the peripheral sector of the complex. Requires [4Fe-4S] cluster as cofactor.

It localises to the cell membrane. The catalysed reaction is a quinone + NADH + 5 H(+)(in) = a quinol + NAD(+) + 4 H(+)(out). In terms of biological role, NDH-1 shuttles electrons from NADH, via FMN and iron-sulfur (Fe-S) centers, to quinones in the respiratory chain. The immediate electron acceptor for the enzyme in this species is believed to be a menaquinone. Couples the redox reaction to proton translocation (for every two electrons transferred, four hydrogen ions are translocated across the cytoplasmic membrane), and thus conserves the redox energy in a proton gradient. This Frankia casuarinae (strain DSM 45818 / CECT 9043 / HFP020203 / CcI3) protein is NADH-quinone oxidoreductase subunit B.